Here is a 328-residue protein sequence, read N- to C-terminus: Phosphate acyltransferase (328 aa).

This sequence belongs to the PlsX family. Homodimer. Probably interacts with PlsY.

It localises to the cytoplasm. The catalysed reaction is a fatty acyl-[ACP] + phosphate = an acyl phosphate + holo-[ACP]. Its pathway is lipid metabolism; phospholipid metabolism. Functionally, catalyzes the reversible formation of acyl-phosphate (acyl-PO(4)) from acyl-[acyl-carrier-protein] (acyl-ACP). This enzyme utilizes acyl-ACP as fatty acyl donor, but not acyl-CoA. This Campylobacter jejuni subsp. jejuni serotype O:2 (strain ATCC 700819 / NCTC 11168) protein is Phosphate acyltransferase.